Here is a 292-residue protein sequence, read N- to C-terminus: Aquaporin-3 (292 aa).

Residues 1 to 24 (MGRQKELMNRCGEMLHIRYRLLRQ) are Cytoplasmic-facing. The helical transmembrane segment at 25-42 (ALAECLGTLILVMFGCGS) threads the bilayer. Residues 43–56 (VAQVVLSRGTHGGF) are Extracellular-facing. Residues 57–74 (LTINLAFGFAVTLGILVA) traverse the membrane as a helical segment. Residues 75–78 (GQVS) lie on the Cytoplasmic side of the membrane. Positions 79–92 (GAHLNPAVTFAMCF) form an intramembrane region, discontinuously helical. The short motif at 83 to 85 (NPA) is the NPA 1 element. Over 93–100 (LAREPWIK) the chain is Cytoplasmic. The helical transmembrane segment at 101 to 121 (LPIYALAQTLGAFLGAGIVFG) threads the bilayer. Residues 122–159 (LYYDAIWAFANNELFVSGPNGTAGIFATYPSGHLDMVN) are Extracellular-facing. N-linked (GlcNAc...) asparagine glycosylation occurs at asparagine 141. Residues 160-177 (GFFDQFIGTAALIVCVLA) traverse the membrane as a helical segment. Residues 178–189 (IVDPYNNPVPRG) are Cytoplasmic-facing. Residues 190-206 (LEAFTVGLVVLVIGTSM) traverse the membrane as a helical segment. Residues 207 to 210 (GFNS) lie on the Extracellular side of the membrane. Residues 211–224 (GYAVNPARDFGPRL) constitute an intramembrane region (discontinuously helical). An NPA 2 motif is present at residues 215–217 (NPA). Topologically, residues 225–242 (FTALAGWGSEVFTTGRHW) are extracellular. A helical membrane pass occupies residues 243–264 (WWVPIVSPLLGSIAGVFVYQLM). Residues 265–292 (IGCHLEQPPPSTEEENVKLAHMKHKEQI) are Cytoplasmic-facing.

This sequence belongs to the MIP/aquaporin (TC 1.A.8) family. Homotetramer; each monomer provides an independent glycerol/water pore. Could also exist in other oligomeric states. Detected in principal cells in collecting ducts in kidney medulla (at protein level). Renal medulla and colon. Predominantly in the inner medulla. Expressed in basal layer of epidermal keratinocytes.

The protein localises to the cell membrane. Its subcellular location is the basolateral cell membrane. The enzyme catalyses glycerol(in) = glycerol(out). The catalysed reaction is H2O(in) = H2O(out). It carries out the reaction urea(in) = urea(out). It catalyses the reaction H2O2(out) = H2O2(in). Functionally, aquaglyceroporins form homotetrameric transmembrane channels, with each monomer independently mediating glycerol and water transport across the plasma membrane along their osmotic gradient. Could also be permeable to urea. Also participates in cell permeability to H2O2 and H2O2-mediated signaling. In skin, transports glycerol to the epidermis and stratum corneum, where it maintains hydration, elasticity, and supports lipid biosynthesis for barrier repair. In kidney, contributes to the reabsorption of water, helping the body maintain proper fluid balance. The sequence is that of Aquaporin-3 from Mus musculus (Mouse).